Reading from the N-terminus, the 2799-residue chain is Peramine synthetase ppzA (2799 aa).

The tract at residues 270 to 666 is adenylation 1; the sequence is QERCRLQPNA…VGRKDTQVKI (397 aa). One can recognise a Carrier 1 domain in the interval 799–875; sequence QPLTGMERLL…DLSRQSRYIE (77 aa). Position 836 is an O-(pantetheine 4'-phosphoryl)serine (Ser836). The interval 914-1327 is condensation; sequence DAYPCTPLQE…ITILTTEDLE (414 aa). The tract at residues 1350-1743 is adenylation 2; it reads DKVQARPNAP…TLSFVRRKDT (394 aa). The methylation (Met) domain stretch occupies residues 1874 to 1970; sequence LEIGCGSGMM…EYLVKLIQDI (97 aa). A Carrier 2 domain is found at 2290-2368; the sequence is SPTTDMEKEL…RLLLDCCCDD (79 aa). Position 2327 is an O-(pantetheine 4'-phosphoryl)serine (Ser2327). Residues 2420-2737 form a thiesterase (TE) domain region; the sequence is TVLLTGANGF…LADMLQDLED (318 aa).

Belongs to the NRP synthetase family. It depends on pantetheine 4'-phosphate as a cofactor.

The enzyme catalyses (S)-1-pyrroline-5-carboxylate + L-arginine + S-adenosyl-L-methionine + 2 ATP = peramine + 2 AMP + S-adenosyl-L-homocysteine + 2 diphosphate + H2O + 2 H(+). Its pathway is secondary metabolite biosynthesis. Its function is as follows. Nonribosomal peptide synthetase; part of the gene cluster that mediates the biosynthesis of pyrrolopyrazines, secondary metabolites showing insecticidal activity. The single multifunctional NRPS ppzA is responsible for the biosynthesis of peramine. The condensation domain of ppzA is proposed to catalyze formation of a peptide bond between 1-pyrroline-5-carboxylate and arginine. The methylation domain of ppzA would catalyze the N-methylation of the alpha-amino group of arginine. The reductase domain is proposed to be responsible for reduction of the thioester and the cyclization to form an iminium ion resulting in release from the peptide synthetase. Deprotonation of this intermediate and oxidation of the pyrroline ring would give rise to peramine. This final oxidation to give the pyrrole functionality may be spontaneous. In Epichloe species that produce only peramine, the peramine synthetase gene is not localized in a gene cluster, in contrast to Metarhizium species that contain additional pyrrolopyrazine biosynthesis genes. The 2-oxoglutarate-Fe(II) type oxidoreductase ppzC hydroxylates peramine to yield the newly identified compound 8-hydroxyperamine whereas ppzD converts L-proline into trans-4-hydroxy-L-proline, a precursor of peramine biosynthesis. In Metarhizium majus (strain ARSEF 297), this protein is Peramine synthetase ppzA.